The following is a 293-amino-acid chain: N-acetylneuraminate lyase (293 aa).

Aceneuramate contacts are provided by Ser48 and Ser49. The active-site Proton donor is Tyr137. The active-site Schiff-base intermediate with substrate is the Lys165. Thr167, Gly189, Asp191, Glu192, and Ser208 together coordinate aceneuramate.

It belongs to the DapA family. NanA subfamily. In terms of assembly, homotetramer.

It is found in the cytoplasm. The catalysed reaction is aceneuramate = aldehydo-N-acetyl-D-mannosamine + pyruvate. It functions in the pathway amino-sugar metabolism; N-acetylneuraminate degradation; D-fructose 6-phosphate from N-acetylneuraminate: step 1/5. Catalyzes the reversible aldol cleavage of N-acetylneuraminic acid (sialic acid; Neu5Ac) to form pyruvate and N-acetylmannosamine (ManNAc) via a Schiff base intermediate. This is N-acetylneuraminate lyase from Staphylococcus aureus (strain Mu3 / ATCC 700698).